Consider the following 309-residue polypeptide: Aspartate carbamoyltransferase catalytic subunit (309 aa).

Carbamoyl phosphate-binding residues include R58 and T59. K86 is an L-aspartate binding site. Residues R108, H136, and Q139 each contribute to the carbamoyl phosphate site. L-aspartate is bound by residues R170 and R224. Carbamoyl phosphate-binding residues include G266 and P267.

This sequence belongs to the aspartate/ornithine carbamoyltransferase superfamily. ATCase family. Heterododecamer (2C3:3R2) of six catalytic PyrB chains organized as two trimers (C3), and six regulatory PyrI chains organized as three dimers (R2).

The catalysed reaction is carbamoyl phosphate + L-aspartate = N-carbamoyl-L-aspartate + phosphate + H(+). The protein operates within pyrimidine metabolism; UMP biosynthesis via de novo pathway; (S)-dihydroorotate from bicarbonate: step 2/3. Catalyzes the condensation of carbamoyl phosphate and aspartate to form carbamoyl aspartate and inorganic phosphate, the committed step in the de novo pyrimidine nucleotide biosynthesis pathway. This chain is Aspartate carbamoyltransferase catalytic subunit, found in Campylobacter curvus (strain 525.92).